The chain runs to 248 residues: ATP synthase subunit a (248 aa).

The next 5 helical transmembrane spans lie at 31–51 (GQVL…VLLG), 90–110 (VPYV…GNLF), 129–149 (INTT…AGIS), 195–215 (VIAV…MILF), and 216–236 (LFTG…YIGE).

It belongs to the ATPase A chain family. As to quaternary structure, F-type ATPases have 2 components, CF(1) - the catalytic core - and CF(0) - the membrane proton channel. CF(1) has five subunits: alpha(3), beta(3), gamma(1), delta(1), epsilon(1). CF(0) has four main subunits: a, b, b' and c.

Its subcellular location is the cellular thylakoid membrane. Its function is as follows. Key component of the proton channel; it plays a direct role in the translocation of protons across the membrane. This chain is ATP synthase subunit a, found in Synechococcus sp. (strain JA-3-3Ab) (Cyanobacteria bacterium Yellowstone A-Prime).